We begin with the raw amino-acid sequence, 458 residues long: NADH-quinone oxidoreductase subunit N (458 aa).

Helical transmembrane passes span 2-22 (LLIL…CFAL), 30-50 (IIYN…FKYS), 62-82 (GINI…SLII), 93-113 (AIKF…FVAI), 118-138 (FLLL…LAGF), 153-173 (FILG…IYGF), 196-216 (LIIG…SSPL), 235-255 (FTSA…KLII), 261-281 (INYN…AFGA), 290-310 (LMAY…ILPN), 319-339 (LYIL…IMLF), 361-381 (IAAL…LTGF), 397-417 (FTLA…YLKV), and 438-458 (LLLI…IILF).

This sequence belongs to the complex I subunit 2 family. As to quaternary structure, NDH-1 is composed of 14 different subunits. Subunits NuoA, H, J, K, L, M, N constitute the membrane sector of the complex.

Its subcellular location is the cell inner membrane. It catalyses the reaction a quinone + NADH + 5 H(+)(in) = a quinol + NAD(+) + 4 H(+)(out). Functionally, NDH-1 shuttles electrons from NADH, via FMN and iron-sulfur (Fe-S) centers, to quinones in the respiratory chain. The immediate electron acceptor for the enzyme in this species is believed to be ubiquinone. Couples the redox reaction to proton translocation (for every two electrons transferred, four hydrogen ions are translocated across the cytoplasmic membrane), and thus conserves the redox energy in a proton gradient. This chain is NADH-quinone oxidoreductase subunit N, found in Rickettsia typhi (strain ATCC VR-144 / Wilmington).